The sequence spans 122 residues: Large ribosomal subunit protein uL14 (122 aa).

Belongs to the universal ribosomal protein uL14 family. Part of the 50S ribosomal subunit. Forms a cluster with proteins L3 and L19. In the 70S ribosome, L14 and L19 interact and together make contacts with the 16S rRNA in bridges B5 and B8.

Binds to 23S rRNA. Forms part of two intersubunit bridges in the 70S ribosome. The sequence is that of Large ribosomal subunit protein uL14 from Mycobacterium leprae (strain TN).